Consider the following 945-residue polypeptide: Leucine--tRNA ligase 1 (945 aa).

The 'HIGH' region motif lies at 42–52; it reads PYTNSPLHIGH. Residues 625-629 carry the 'KMSKS' region motif; that stretch reads KMSKS. Residue Lys-628 participates in ATP binding.

Belongs to the class-I aminoacyl-tRNA synthetase family.

The protein localises to the cytoplasm. It catalyses the reaction tRNA(Leu) + L-leucine + ATP = L-leucyl-tRNA(Leu) + AMP + diphosphate. The sequence is that of Leucine--tRNA ligase 1 from Sulfurisphaera tokodaii (strain DSM 16993 / JCM 10545 / NBRC 100140 / 7) (Sulfolobus tokodaii).